We begin with the raw amino-acid sequence, 208 residues long: MRIRVKICGITRLEDAMTAVHHGVDAIGFILWPQSERYISPEEAGQIVRYLPPFVQAVGVFVNPDKSWVEVASAAAGLDLLQFHGDESPDFCSQFHLPYIKAVRVRDGLDLLQYAQCYEGSKGLLLDAYAEGKPGGTGHIFDWKLIPSGLSLPWILSGGLHSDNVVDAIEQTRPLAIDVSSGVEIANGIKDADKISVFMQGVRSCENV.

The protein belongs to the TrpF family.

The catalysed reaction is N-(5-phospho-beta-D-ribosyl)anthranilate = 1-(2-carboxyphenylamino)-1-deoxy-D-ribulose 5-phosphate. It participates in amino-acid biosynthesis; L-tryptophan biosynthesis; L-tryptophan from chorismate: step 3/5. The sequence is that of N-(5'-phosphoribosyl)anthranilate isomerase from Nitrosomonas eutropha (strain DSM 101675 / C91 / Nm57).